A 571-amino-acid polypeptide reads, in one-letter code: WAP, Kazal, immunoglobulin, Kunitz and NTR domain-containing protein 2 (571 aa).

An N-terminal signal peptide occupies residues 1–29 (MCAPGYHRFWFHWGLLLLLLLEAPLRGLA). The WAP domain occupies 34 to 87 (RYSHAGICPNDMNPNLWVDAQSTCKRECETDQECETYEKCCPNVCGTKSCVAAR). Cystine bridges form between cysteine 41–cysteine 74, cysteine 57–cysteine 78, cysteine 61–cysteine 73, cysteine 67–cysteine 83, cysteine 129–cysteine 159, cysteine 133–cysteine 152, cysteine 141–cysteine 170, and cysteine 226–cysteine 282. Residues 121–172 (WDGQPVCKCKDRCEKEPSFTCASDGLTYYNRCFMDAEACSKGITLSVVTCRY) form the Kazal-like domain. Residues 205–298 (PALLNHPVHQ…GVLRADFPLS (94 aa)) enclose the Ig-like C2-type domain. Asparagine 314 carries N-linked (GlcNAc...) asparagine glycosylation. Disulfide bonds link cysteine 323–cysteine 373, cysteine 332–cysteine 356, cysteine 348–cysteine 369, cysteine 381–cysteine 431, cysteine 390–cysteine 414, cysteine 406–cysteine 427, cysteine 440–cysteine 510, cysteine 443–cysteine 512, and cysteine 454–cysteine 561. BPTI/Kunitz inhibitor domains follow at residues 323-373 (CLKP…MLAC) and 381-431 (CSLP…EESC). Residues 440 to 561 (CRACKPRQKL…LREVMYKKTC (122 aa)) form the NTR domain. Asparagine 514 carries an N-linked (GlcNAc...) asparagine glycan.

This sequence belongs to the WFIKKN family. Interacts with both mature and propeptide myostatin/MSTN. Widely expressed, with high expression in skeletal muscle and heart. Also expressed in brain, lung and testis. Weakly expressed in liver and kidney.

It localises to the secreted. In terms of biological role, protease-inhibitor that contains multiple distinct protease inhibitor domains. Probably has serine protease- and metalloprotease-inhibitor activity. Inhibits the biological activity of mature myostatin, but not activin. The protein is WAP, Kazal, immunoglobulin, Kunitz and NTR domain-containing protein 2 (Wfikkn2) of Mus musculus (Mouse).